A 271-amino-acid chain; its full sequence is Mannosyl-3-phosphoglycerate phosphatase (271 aa).

Asp-13 (nucleophile) is an active-site residue. Asp-13, Asp-15, and Asp-214 together coordinate Mg(2+).

The protein belongs to the HAD-like hydrolase superfamily. MPGP family. Mg(2+) serves as cofactor.

Its subcellular location is the cytoplasm. It carries out the reaction 2-O-(alpha-D-mannosyl)-3-phosphoglycerate + H2O = (2R)-2-O-(alpha-D-mannosyl)-glycerate + phosphate. The sequence is that of Mannosyl-3-phosphoglycerate phosphatase (yedP) from Shigella boydii serotype 4 (strain Sb227).